Reading from the N-terminus, the 362-residue chain is Atypical chemokine receptor 3 (362 aa).

Residues 1 to 47 lie on the Extracellular side of the membrane; the sequence is MDVHLFDYVEPGNYSDINWPCNSSDCIVVDTVQCPAMPNKNVLLYTL. Residues asparagine 13 and asparagine 22 are each glycosylated (N-linked (GlcNAc...) asparagine). A helical transmembrane segment spans residues 48–68; that stretch reads SFIYIFIFVIGMIANSVVVWV. Over 69–81 the chain is Cytoplasmic; that stretch reads NIQAKTTGYDTHC. Residues 82-102 traverse the membrane as a helical segment; sequence YILNLAIADLWVVITIPVWVV. At 103–118 the chain is on the extracellular side; the sequence is SLVQHNQWPMGELTCK. Cysteines 117 and 196 form a disulfide. Residues 119 to 139 form a helical membrane-spanning segment; it reads ITHLIFSINLFGSIFFLACMS. The Cytoplasmic portion of the chain corresponds to 140–162; sequence VDRYLSITYFTSTSSYKKKMVRR. The chain crosses the membrane as a helical span at residues 163-183; sequence VVCVLVWLLAFFVSLPDTYYL. Residues 184-213 are Extracellular-facing; that stretch reads KTVTSASNNETYCRSFYPEHSIKEWLIGME. The helical transmembrane segment at 214 to 234 threads the bilayer; that stretch reads LVSVILGFAVPFTIIAIFYFL. The Cytoplasmic segment spans residues 235–252; it reads LARAMSASGDQEKHSSRK. Residues 253–273 traverse the membrane as a helical segment; the sequence is IIFSYVVVFLVCWLPYHFVVL. The Extracellular segment spans residues 274–296; that stretch reads LDIFSILHYIPFTCQLENVLFTA. A helical membrane pass occupies residues 297–319; it reads LHVTQCLSLVHCCVNPVLYSFIN. Topologically, residues 320–362 are cytoplasmic; it reads RNYRYELMKAFIFKYSAKTGLTKLIDASRVSETEYSALEQNTK. Residues 324-362 form a C-terminal cytoplasmic tail region; it reads YELMKAFIFKYSAKTGLTKLIDASRVSETEYSALEQNTK. Phosphoserine is present on residues serine 347, serine 350, and serine 355.

Belongs to the G-protein coupled receptor 1 family. Atypical chemokine receptor subfamily. Homodimer. Can form heterodimers with CXCR4; heterodimerization may regulate CXCR4 signaling activity. Interacts with ARRB1 and ARRB2. The Ser/Thr residues in the C-terminal cytoplasmic tail may be phosphorylated. In terms of processing, ubiquitinated at the Lys residues in its C-terminal cytoplasmic tail and is essential for correct trafficking from and to the cell membrane. Deubiquitinated by CXCL12-stimulation in a reversible manner. As to expression, expressed in vascular smooth muscle cells (at protein level). In brain, expressed in blood vessels, pyramidal cells in hippocampal subfield CA3, mature dentate gyrus granule cells, ventricle walls, olfactory bulb, accumbens shell, supraoptic, lateroanterior and ventromedial hypothalamic nuclei, medial region of thalamus, and motor nuclei, central gray and raphe magnus nucleus of brain stem. Detected in primary neurons, GABAergic neurons, astrocytes, cerebral cortex, ventral striatum and choroid plexus. Not detected in mesencephalon.

The protein resides in the cell membrane. It localises to the early endosome. Its subcellular location is the recycling endosome. Atypical chemokine receptor that controls chemokine levels and localization via high-affinity chemokine binding that is uncoupled from classic ligand-driven signal transduction cascades, resulting instead in chemokine sequestration, degradation, or transcytosis. Also known as interceptor (internalizing receptor) or chemokine-scavenging receptor or chemokine decoy receptor. Acts as a receptor for chemokines CXCL11 and CXCL12/SDF1. Chemokine binding does not activate G-protein-mediated signal transduction but instead induces beta-arrestin recruitment, leading to ligand internalization and activation of MAPK signaling pathway. Required for regulation of CXCR4 protein levels in migrating interneurons, thereby adapting their chemokine responsiveness. In glioma cells, transduces signals via MEK/ERK pathway, mediating resistance to apoptosis. Promotes cell growth and survival. Not involved in cell migration, adhesion or proliferation of normal hematopoietic progenitors but activated by CXCL11 in malignant hemapoietic cells, leading to phosphorylation of ERK1/2 (MAPK3/MAPK1) and enhanced cell adhesion and migration. Plays a regulatory role in CXCR4-mediated activation of cell surface integrins by CXCL12. Required for heart valve development. Functionally, atypical chemokine receptor that controls chemokine levels and localization via high-affinity chemokine binding that is uncoupled from classic ligand-driven signal transduction cascades, resulting instead in chemokine sequestration, degradation, or transcytosis. Also known as interceptor (internalizing receptor) or chemokine-scavenging receptor or chemokine decoy receptor. Acts as a receptor for chemokines CXCL11 and CXCL12/SDF1. Chemokine binding does not activate G-protein-mediated signal transduction but instead induces beta-arrestin recruitment, leading to ligand internalization and activation of MAPK signaling pathway. Required for regulation of CXCR4 protein levels in migrating interneurons, thereby adapting their chemokine responsiveness. In glioma cells, transduces signals via MEK/ERK pathway, mediating resistance to apoptosis. Promotes cell growth and survival. Not involved in cell migration, adhesion or proliferation of normal hematopoietic progenitors but activated by CXCL11 in malignant hemapoietic cells, leading to phosphorylation of ERK1/2 (MAPK3/MAPK1) and enhanced cell adhesion and migration. Plays a regulatory role in CXCR4-mediated activation of cell surface integrins by CXCL12. Required for heart valve development. Regulates axon guidance in the oculomotor system through the regulation of CXCL12 levels. This is Atypical chemokine receptor 3 from Rattus norvegicus (Rat).